The following is a 248-amino-acid chain: UPF0246 protein A1G_03985 (248 aa).

Belongs to the UPF0246 family.

The chain is UPF0246 protein A1G_03985 from Rickettsia rickettsii (strain Sheila Smith).